Here is a 416-residue protein sequence, read N- to C-terminus: RNA polymerase sigma-C factor (416 aa).

The Polymerase core binding signature appears at 205–218 (DLVQEGTLGLERAV). A DNA-binding region (H-T-H motif) is located at residues 374–393 (LAEIGRALDLSRERVRQIES).

The protein belongs to the sigma-70 factor family.

Its function is as follows. Sigma factors are initiation factors that promote the attachment of RNA polymerase to specific initiation sites and are then released. The protein is RNA polymerase sigma-C factor (sigC) of Nostoc sp. (strain PCC 7120 / SAG 25.82 / UTEX 2576).